A 678-amino-acid chain; its full sequence is uncharacterized protein (678 aa).

2 disordered regions span residues Thr-123–Val-156 and Thr-381–Ser-417.

The protein localises to the cytoplasm. This is an uncharacterized protein from Schizosaccharomyces pombe (strain 972 / ATCC 24843) (Fission yeast).